A 472-amino-acid chain; its full sequence is Methanethiol oxidase (472 aa).

Ala2 is subject to N-acetylalanine. Phosphoserine is present on residues Ser111 and Ser467.

The protein belongs to the selenium-binding protein family. As to quaternary structure, interacts with USP33. Post-translationally, the N-terminus is blocked. In terms of tissue distribution, present in liver and colon (at protein level).

The protein resides in the nucleus. Its subcellular location is the cytoplasm. It localises to the cytosol. The protein localises to the membrane. The enzyme catalyses methanethiol + O2 + H2O = hydrogen sulfide + formaldehyde + H2O2 + H(+). It functions in the pathway organosulfur degradation. Functionally, catalyzes the oxidation of methanethiol, an organosulfur compound known to be produced in substantial amounts by gut bacteria. Selenium-binding protein which may be involved in the sensing of reactive xenobiotics in the cytoplasm. May be involved in intra-Golgi protein transport. In Rattus norvegicus (Rat), this protein is Methanethiol oxidase (Selenbp1).